The sequence spans 282 residues: Acetyl-coenzyme A carboxylase carboxyl transferase subunit beta (282 aa).

The region spanning 29-282 is the CoA carboxyltransferase N-terminal domain; sequence LMKRCPNCGL…LLKYGGMQDD (254 aa). The Zn(2+) site is built by Cys33, Cys36, Cys51, and Cys54. The segment at 33-54 adopts a C4-type zinc-finger fold; it reads CPNCGLEFFARRLDKYKTCPDC.

Belongs to the AccD/PCCB family. In terms of assembly, acetyl-CoA carboxylase is a heterohexamer composed of biotin carboxyl carrier protein (AccB), biotin carboxylase (AccC) and two subunits each of ACCase subunit alpha (AccA) and ACCase subunit beta (AccD). It depends on Zn(2+) as a cofactor.

The protein resides in the cytoplasm. It catalyses the reaction N(6)-carboxybiotinyl-L-lysyl-[protein] + acetyl-CoA = N(6)-biotinyl-L-lysyl-[protein] + malonyl-CoA. It functions in the pathway lipid metabolism; malonyl-CoA biosynthesis; malonyl-CoA from acetyl-CoA: step 1/1. Functionally, component of the acetyl coenzyme A carboxylase (ACC) complex. Biotin carboxylase (BC) catalyzes the carboxylation of biotin on its carrier protein (BCCP) and then the CO(2) group is transferred by the transcarboxylase to acetyl-CoA to form malonyl-CoA. The chain is Acetyl-coenzyme A carboxylase carboxyl transferase subunit beta from Lactobacillus delbrueckii subsp. bulgaricus (strain ATCC 11842 / DSM 20081 / BCRC 10696 / JCM 1002 / NBRC 13953 / NCIMB 11778 / NCTC 12712 / WDCM 00102 / Lb 14).